The primary structure comprises 313 residues: Ribose-phosphate pyrophosphokinase (313 aa).

ATP is bound by residues 40-42 (DGE) and 98-99 (RQ). Mg(2+) is bound by residues His132 and Asp172. The active site involves Lys195. D-ribose 5-phosphate contacts are provided by residues Arg197, Asp221, and 225–229 (DTAGT).

It belongs to the ribose-phosphate pyrophosphokinase family. Class I subfamily. In terms of assembly, homohexamer. It depends on Mg(2+) as a cofactor.

The protein localises to the cytoplasm. It catalyses the reaction D-ribose 5-phosphate + ATP = 5-phospho-alpha-D-ribose 1-diphosphate + AMP + H(+). It participates in metabolic intermediate biosynthesis; 5-phospho-alpha-D-ribose 1-diphosphate biosynthesis; 5-phospho-alpha-D-ribose 1-diphosphate from D-ribose 5-phosphate (route I): step 1/1. Its function is as follows. Involved in the biosynthesis of the central metabolite phospho-alpha-D-ribosyl-1-pyrophosphate (PRPP) via the transfer of pyrophosphoryl group from ATP to 1-hydroxyl of ribose-5-phosphate (Rib-5-P). The polypeptide is Ribose-phosphate pyrophosphokinase (Porphyromonas gingivalis (strain ATCC BAA-308 / W83)).